A 377-amino-acid polypeptide reads, in one-letter code: Queuine tRNA-ribosyltransferase (377 aa).

The Proton acceptor role is filled by Asp-94. Substrate is bound by residues 94–98 (DSGGF), Asp-148, Gln-191, and Gly-218. An RNA binding region spans residues 249 to 255 (GVGTPDD). The active-site Nucleophile is Asp-268. Residues 273–277 (TRAGR) form an RNA binding; important for wobble base 34 recognition region.

It belongs to the queuine tRNA-ribosyltransferase family. As to quaternary structure, homodimer. Within each dimer, one monomer is responsible for RNA recognition and catalysis, while the other monomer binds to the replacement base PreQ1.

It carries out the reaction 7-aminomethyl-7-carbaguanine + guanosine(34) in tRNA = 7-aminomethyl-7-carbaguanosine(34) in tRNA + guanine. It participates in tRNA modification; tRNA-queuosine biosynthesis. Functionally, catalyzes the base-exchange of a guanine (G) residue with the queuine precursor 7-aminomethyl-7-deazaguanine (PreQ1) at position 34 (anticodon wobble position) in tRNAs with GU(N) anticodons (tRNA-Asp, -Asn, -His and -Tyr). Catalysis occurs through a double-displacement mechanism. The nucleophile active site attacks the C1' of nucleotide 34 to detach the guanine base from the RNA, forming a covalent enzyme-RNA intermediate. The proton acceptor active site deprotonates the incoming PreQ1, allowing a nucleophilic attack on the C1' of the ribose to form the product. After dissociation, two additional enzymatic reactions on the tRNA convert PreQ1 to queuine (Q), resulting in the hypermodified nucleoside queuosine (7-(((4,5-cis-dihydroxy-2-cyclopenten-1-yl)amino)methyl)-7-deazaguanosine). This Brucella suis biovar 1 (strain 1330) protein is Queuine tRNA-ribosyltransferase.